The sequence spans 302 residues: MKLLMLCREPRLYSCQRLKEAAKHQGHEMDILDPNHCFLKLSQNPPHFQIFYQENSESKPYLLSDYDAVLPRFGTTSTQMGCSVLQHFEGKGTFCLNSSQAFLNARDKWKSLQLLLKAGIPVPNSLLSGGEVQAQATIPHISSPTILKTLNGSQGIGVILAEKPQSAVSIMEAFKQTNISMLQQDFIEEAGNADIRCFVIGDQVVATMQRIGQNGEFRANCHRGGKTEKITLSDEEKQIAIQATKAIGLDVAGVDLIRSKKGLLVLEVNASPGLEMIEKTSGIDIAAEIIDYIEINAFINSR.

Residues Leu-112–Glu-294 form the ATP-grasp domain. ATP-binding positions include Lys-148, Asp-185 to Phe-186, Asp-194, and Arg-218 to Asn-220. Residues Asp-255, Glu-267, and Asn-269 each contribute to the Mg(2+) site. Asp-255, Glu-267, and Asn-269 together coordinate Mn(2+).

It belongs to the RimK family. Mg(2+) serves as cofactor. The cofactor is Mn(2+).

The chain is Probable alpha-L-glutamate ligase from Haemophilus influenzae (strain ATCC 51907 / DSM 11121 / KW20 / Rd).